The following is a 94-amino-acid chain: Large ribosomal subunit protein bL25 (94 aa).

Belongs to the bacterial ribosomal protein bL25 family. As to quaternary structure, part of the 50S ribosomal subunit; part of the 5S rRNA/L5/L18/L25 subcomplex. Contacts the 5S rRNA. Binds to the 5S rRNA independently of L5 and L18.

This is one of the proteins that binds to the 5S RNA in the ribosome where it forms part of the central protuberance. The protein is Large ribosomal subunit protein bL25 of Klebsiella pneumoniae (strain 342).